The primary structure comprises 566 residues: Protein pacG (566 aa).

A DNA-binding region (NDT80) is located at residues 79–326 (TSFDPPPPAE…RSPRNFQSRK (248 aa)). 2 disordered regions span residues 314–422 (VRGR…EAHR) and 448–470 (DSRP…DSGR). Positions 333-349 (SAAASRKNAQAAAASNN) are enriched in low complexity. 3 stretches are compositionally biased toward polar residues: residues 365–391 (VKSS…ATNS), 403–413 (HSSVYSQSSPE), and 452–466 (HTSF…SLSV).

The protein localises to the nucleus. Its subcellular location is the cytoplasm. Functionally, transcription factor that acts as a positive regulator of nonrepressible acid phosphatase activity. Is a major regulator of responses to nitrogen and carbon starvation and is essential for the expression of genes involved in vegetative incompatibility (like pin-c, het-6, and tol). Vegetative incompatibility is a non-self-recognition system ubiquitous in filamentous fungi which results in programmed cell death. This Emericella nidulans (strain FGSC A4 / ATCC 38163 / CBS 112.46 / NRRL 194 / M139) (Aspergillus nidulans) protein is Protein pacG (pacG).